A 127-amino-acid chain; its full sequence is Large ribosomal subunit protein bL19 (127 aa).

This sequence belongs to the bacterial ribosomal protein bL19 family.

In terms of biological role, this protein is located at the 30S-50S ribosomal subunit interface and may play a role in the structure and function of the aminoacyl-tRNA binding site. In Ruegeria pomeroyi (strain ATCC 700808 / DSM 15171 / DSS-3) (Silicibacter pomeroyi), this protein is Large ribosomal subunit protein bL19.